A 403-amino-acid chain; its full sequence is Glucose-signaling factor 2 (403 aa).

Residues 1–177 (MEIYIRLNAD…QEVQANYSSL (177 aa)) are Lumenal-facing. N-linked (GlcNAc...) asparagine glycans are attached at residues N89 and N173. Residues 178–198 (VAQWLFFVMHIFKVGIITLFL) form a helical; Signal-anchor for type II membrane protein membrane-spanning segment. Residues 199–403 (KLGIANPISF…IKKNDLKKSN (205 aa)) lie on the Cytoplasmic side of the membrane. Residues 330–388 (ELENNLKKILEEYDGDIGKMNAEIRRFRRFGIYEPDEKLASLVKLRREIADEKEKASNN) are a coiled coil.

It localises to the endoplasmic reticulum membrane. In terms of biological role, may be involved in the secretion of hexose transporters from the endoplasmic reticulum. Involved in secretion of GAL2 and HXT1. This is Glucose-signaling factor 2 (GSF2) from Saccharomyces cerevisiae (strain ATCC 204508 / S288c) (Baker's yeast).